We begin with the raw amino-acid sequence, 101 residues long: NADH-quinone oxidoreductase subunit K (101 aa).

Transmembrane regions (helical) follow at residues 4–24 (LGHM…GIFL), 30–50 (IVLL…FVGF), and 62–82 (FVFF…AILV).

Belongs to the complex I subunit 4L family. In terms of assembly, NDH-1 is composed of 14 different subunits. Subunits NuoA, H, J, K, L, M, N constitute the membrane sector of the complex.

It is found in the cell inner membrane. It catalyses the reaction a quinone + NADH + 5 H(+)(in) = a quinol + NAD(+) + 4 H(+)(out). NDH-1 shuttles electrons from NADH, via FMN and iron-sulfur (Fe-S) centers, to quinones in the respiratory chain. The immediate electron acceptor for the enzyme in this species is believed to be ubiquinone. Couples the redox reaction to proton translocation (for every two electrons transferred, four hydrogen ions are translocated across the cytoplasmic membrane), and thus conserves the redox energy in a proton gradient. The chain is NADH-quinone oxidoreductase subunit K from Stenotrophomonas maltophilia (strain K279a).